Here is a 304-residue protein sequence, read N- to C-terminus: Ribonuclease HII (304 aa).

The tract at residues 1-53 (MIRDTKQPIKVPAKPASRSGGKAKTVKPKTVKPKAVKAADGKAASAKASTSKA) is disordered. The segment covering 24–35 (KTVKPKTVKPKA) has biased composition (basic residues). Residues 36–53 (VKAADGKAASAKASTSKA) show a composition bias toward low complexity. The 189-residue stretch at 96–284 (WPIAGCDEAG…VAAAWQKIEG (189 aa)) folds into the RNase H type-2 domain. Residues Asp102, Glu103, and Asp193 each contribute to the a divalent metal cation site.

This sequence belongs to the RNase HII family. It depends on Mn(2+) as a cofactor. Requires Mg(2+) as cofactor.

The protein resides in the cytoplasm. It carries out the reaction Endonucleolytic cleavage to 5'-phosphomonoester.. In terms of biological role, endonuclease that specifically degrades the RNA of RNA-DNA hybrids. In Rhodopseudomonas palustris (strain ATCC BAA-98 / CGA009), this protein is Ribonuclease HII.